Consider the following 236-residue polypeptide: Purine nucleoside phosphorylase DeoD-type (236 aa).

H5 serves as a coordination point for a purine D-ribonucleoside. Residues G21, R25, R44, and 88-91 (RIGS) contribute to the phosphate site. Residues 180–182 (EME) and 204–205 (SD) each bind a purine D-ribonucleoside. The active-site Proton donor is D205.

The protein belongs to the PNP/UDP phosphorylase family. As to quaternary structure, homohexamer; trimer of homodimers.

The catalysed reaction is a purine D-ribonucleoside + phosphate = a purine nucleobase + alpha-D-ribose 1-phosphate. It carries out the reaction a purine 2'-deoxy-D-ribonucleoside + phosphate = a purine nucleobase + 2-deoxy-alpha-D-ribose 1-phosphate. Catalyzes the reversible phosphorolytic breakdown of the N-glycosidic bond in the beta-(deoxy)ribonucleoside molecules, with the formation of the corresponding free purine bases and pentose-1-phosphate. The sequence is that of Purine nucleoside phosphorylase DeoD-type from Chromobacterium violaceum (strain ATCC 12472 / DSM 30191 / JCM 1249 / CCUG 213 / NBRC 12614 / NCIMB 9131 / NCTC 9757 / MK).